The following is a 690-amino-acid chain: DNA ligase (690 aa).

Residues 36-40 (DAVYD), 85-86 (SL), and E124 each bind NAD(+). K126 (N6-AMP-lysine intermediate) is an active-site residue. The NAD(+) site is built by R147, E184, K308, and K332. 4 residues coordinate Zn(2+): C426, C429, C444, and C449. A BRCT domain is found at 614–690 (NQSNVFDGKS…INENELKLLL (77 aa)).

This sequence belongs to the NAD-dependent DNA ligase family. LigA subfamily. Mg(2+) is required as a cofactor. The cofactor is Mn(2+).

It carries out the reaction NAD(+) + (deoxyribonucleotide)n-3'-hydroxyl + 5'-phospho-(deoxyribonucleotide)m = (deoxyribonucleotide)n+m + AMP + beta-nicotinamide D-nucleotide.. In terms of biological role, DNA ligase that catalyzes the formation of phosphodiester linkages between 5'-phosphoryl and 3'-hydroxyl groups in double-stranded DNA using NAD as a coenzyme and as the energy source for the reaction. It is essential for DNA replication and repair of damaged DNA. The polypeptide is DNA ligase (Prochlorococcus marinus (strain NATL1A)).